The following is a 426-amino-acid chain: Histidine--tRNA ligase (426 aa).

This sequence belongs to the class-II aminoacyl-tRNA synthetase family. Homodimer.

The protein localises to the cytoplasm. The enzyme catalyses tRNA(His) + L-histidine + ATP = L-histidyl-tRNA(His) + AMP + diphosphate + H(+). The protein is Histidine--tRNA ligase of Streptococcus agalactiae serotype III (strain NEM316).